The following is a 29-amino-acid chain: Inorganic pyrophosphatase (29 aa).

The protein localises to the periplasm. The catalysed reaction is diphosphate + H2O = 2 phosphate + H(+). Its function is as follows. Inorganic pyrophosphatase is an essential enzyme for the activation of sulfate by sulfate reducing bacteria. This is a high activity pyrophosphatase. In Nitratidesulfovibrio vulgaris (strain ATCC 29579 / DSM 644 / CCUG 34227 / NCIMB 8303 / VKM B-1760 / Hildenborough) (Desulfovibrio vulgaris), this protein is Inorganic pyrophosphatase.